We begin with the raw amino-acid sequence, 342 residues long: Voltage-gated hydrogen channel 1 (342 aa).

Disordered regions lie at residues 1–20 (MEGDNCNKSRHKSHNMINPN) and 74–102 (FNDNNNHERPAPQEQSTQNTMISMQSEQK). Topologically, residues 1–148 (MEGDNCNKSR…KLRHILHSKP (148 aa)) are cytoplasmic. Residues 86-102 (QEQSTQNTMISMQSEQK) are compositionally biased toward polar residues. A helical membrane pass occupies residues 149 to 169 (IHVAIIVLVVLDSFLVVGELL). Residues 170-185 (IDLKVIIVPHGNPAPE) lie on the Extracellular side of the membrane. A helical transmembrane segment spans residues 186–208 (ILHGFSLSILSIFMVEIALKIIA). The Cytoplasmic segment spans residues 209–217 (DHRHFIHHK). Residues 218-238 (VEVLDAVVVVISFGVDIALIF) form a helical membrane-spanning segment. Topologically, residues 239–247 (VGESEALAA) are extracellular. The chain crosses the membrane as a helical span at residues 248 to 268 (IGLLVILRLWRVFRIINGIIV). Residues 269-342 (TVKTKADDRV…HSTTTASADV (74 aa)) are Cytoplasmic-facing. A coiled-coil region spans residues 271-315 (KTKADDRVHEIKKKNSELELQIHNLEEKLSQKEQDMSRLHEILRC).

This sequence belongs to the hydrogen channel family. As to quaternary structure, homodimer.

It is found in the membrane. The protein resides in the cell membrane. Less sensitive to zinc ions as compared to the mammalian homologs. Mediates the voltage-dependent proton permeability of excitable membranes. Forms a proton-selective channel through which protons may pass in accordance with their electrochemical gradient. The sequence is that of Voltage-gated hydrogen channel 1 (HVCN1) from Ciona intestinalis (Transparent sea squirt).